The chain runs to 314 residues: Homoserine kinase (314 aa).

ATP is bound at residue 95–105 (PHSRGLGSSAA).

This sequence belongs to the GHMP kinase family. Homoserine kinase subfamily.

Its subcellular location is the cytoplasm. It catalyses the reaction L-homoserine + ATP = O-phospho-L-homoserine + ADP + H(+). The protein operates within amino-acid biosynthesis; L-threonine biosynthesis; L-threonine from L-aspartate: step 4/5. Functionally, catalyzes the ATP-dependent phosphorylation of L-homoserine to L-homoserine phosphate. The sequence is that of Homoserine kinase from Mycobacterium sp. (strain KMS).